Here is a 287-residue protein sequence, read N- to C-terminus: Cyclopropane mycolic acid synthase 1 (287 aa).

Residues 33-34 (YS), 68-76 (LLDVGCGWG), 94-99 (TLSKNQ), and 123-124 (WE) contribute to the S-adenosyl-L-methionine site. Cysteine 269 is an active-site residue.

This sequence belongs to the CFA/CMAS family. Homodimer.

It localises to the cytoplasm. It catalyses the reaction a 1-acyl-2-(9Z)-enoyl-sn-glycero-3-phospholipid + S-adenosyl-L-methionine = a 1-acyl-2-(9-cyclopronane)-acyl-sn-glycero-3-phospholipid + S-adenosyl-L-homocysteine + H(+). It functions in the pathway lipid metabolism; mycolic acid biosynthesis. Its function is as follows. Catalyzes the conversion of a double bond to a cyclopropane ring at the distal position of an alpha mycolic acid via the transfer of a methylene group from S-adenosyl-L-methionine. Cyclopropanated mycolic acids are key factors participating in cell envelope permeability, host immunomodulation and persistence. This chain is Cyclopropane mycolic acid synthase 1 (cmaA1), found in Mycobacterium tuberculosis (strain CDC 1551 / Oshkosh).